The primary structure comprises 101 residues: Ubiquitin-related modifier 1 (101 aa).

1-thioglycine is present on Gly-101. Gly-101 participates in a covalent cross-link: Glycyl lysine isopeptide (Gly-Lys) (interchain with K-? in acceptor proteins).

It belongs to the URM1 family. As to quaternary structure, component of a complex at least composed of URM1, CTU2/NCS2 and CTU1/ATPBD3. C-terminal thiocarboxylation occurs in 2 steps, it is first acyl-adenylated (-COAMP) via the hesA/moeB/thiF part of MOCS3, then thiocarboxylated (-COSH) via the rhodanese domain of MOCS3.

It is found in the cytoplasm. Its pathway is tRNA modification; 5-methoxycarbonylmethyl-2-thiouridine-tRNA biosynthesis. Its function is as follows. Acts as a sulfur carrier required for 2-thiolation of mcm(5)S(2)U at tRNA wobble positions of cytosolic tRNA(Lys), tRNA(Glu) and tRNA(Gln). Serves as sulfur donor in tRNA 2-thiolation reaction by being thiocarboxylated (-COSH) at its C-terminus by MOCS3. The sulfur is then transferred to tRNA to form 2-thiolation of mcm(5)S(2)U. Also acts as a ubiquitin-like protein (UBL) that is covalently conjugated via an isopeptide bond to lysine residues of target proteins such as MOCS3, ATPBD3, CTU2, USP15 and CAS. The thiocarboxylated form serves as substrate for conjugation and oxidative stress specifically induces the formation of UBL-protein conjugates. This is Ubiquitin-related modifier 1 from Bos taurus (Bovine).